The primary structure comprises 1466 residues: Immediate-early protein 2 (1466 aa).

Disordered regions lie at residues 1–21 (MEPA…MQDY), 223–242 (NRGY…GGNG), 339–370 (YNHP…RGNQ), 428–472 (RCRS…VTKA), 517–965 (RSKT…TSIN), 1005–1068 (FRPH…CRSN), 1086–1179 (SRTR…SENA), and 1191–1223 (TTSH…DSSI). The span at 339 to 350 (YNHPTKAQTIPE) shows a compositional bias: polar residues. A compositionally biased stretch (basic residues) spans 428–437 (RCRSVQKKKE). Basic and acidic residues-rich tracts occupy residues 443–472 (NKHD…VTKA) and 536–553 (PTKD…DNYP). 2 stretches are compositionally biased toward polar residues: residues 583 to 595 (KNVS…TSPK) and 640 to 665 (KNHT…PTAF). A compositionally biased stretch (low complexity) spans 666–681 (NKSNNNKSITNSTSNS). Residues 696 to 713 (NESKDPNRTCGKNSDKHL) show a composition bias toward basic and acidic residues. Composition is skewed to low complexity over residues 720-756 (ASKR…SSRA) and 763-772 (RASSRAPSRA). Basic and acidic residues predominate over residues 773 to 790 (SSRDSSRASSRDSSRDSN). Low complexity predominate over residues 791–800 (RASSKASSRA). Over residues 801–814 (SSRDSSRASSRDSS) the composition is skewed to basic and acidic residues. Composition is skewed to low complexity over residues 826–884 (SRAS…SSRA) and 926–940 (SRAS…SSRA). Over residues 955–965 (RQTPPHDTSIN) the composition is skewed to polar residues. Residues 989–1037 (ARLQCFNHNDQFYNPRFRPHIRTNRKKSESTNDTDSESSMSRCKSHCRN) form an interaction with human UBE2I region. 3 stretches are compositionally biased toward low complexity: residues 1019–1029 (TNDTDSESSMS), 1053–1068 (GSSS…CRSN), and 1086–1110 (SRTR…STLK). The segment covering 1116–1131 (QNRDNKQIKSKSDSKH) has biased composition (basic and acidic residues). Polar residues predominate over residues 1162 to 1177 (HNSSPFNTHEQSNHSE). The segment covering 1195-1213 (LHQKQNVKLHNTKKCKKKR) has biased composition (basic residues).

Belongs to the herpesviridae IE2 family. As to quaternary structure, interacts with human UBE2I in the nucleus. Although this interaction does not promote IE2 sumoylation, it represses transactivation activity.

The protein localises to the host nucleus. Transcriptional transactivator. The chain is Immediate-early protein 2 (U90/U86) from Homo sapiens (Human).